Here is an 87-residue protein sequence, read N- to C-terminus: Small ribosomal subunit protein uS15 (87 aa).

Belongs to the universal ribosomal protein uS15 family. As to quaternary structure, part of the 30S ribosomal subunit. Forms a bridge to the 50S subunit in the 70S ribosome, contacting the 23S rRNA.

Functionally, one of the primary rRNA binding proteins, it binds directly to 16S rRNA where it helps nucleate assembly of the platform of the 30S subunit by binding and bridging several RNA helices of the 16S rRNA. In terms of biological role, forms an intersubunit bridge (bridge B4) with the 23S rRNA of the 50S subunit in the ribosome. The sequence is that of Small ribosomal subunit protein uS15 from Clostridium kluyveri (strain NBRC 12016).